Consider the following 405-residue polypeptide: L-rhamnonate dehydratase (405 aa).

Residues His-33 and Arg-59 each contribute to the substrate site. Asp-226, Glu-252, and Glu-280 together coordinate Mg(2+). His-329 acts as the Proton acceptor in catalysis. Residue Glu-349 coordinates substrate.

This sequence belongs to the mandelate racemase/muconate lactonizing enzyme family. RhamD subfamily. As to quaternary structure, homooctamer; tetramer of dimers. It depends on Mg(2+) as a cofactor.

It catalyses the reaction L-rhamnonate = 2-dehydro-3-deoxy-L-rhamnonate + H2O. Functionally, catalyzes the dehydration of L-rhamnonate to 2-keto-3-deoxy-L-rhamnonate (KDR). This is L-rhamnonate dehydratase from Shigella boydii serotype 4 (strain Sb227).